We begin with the raw amino-acid sequence, 207 residues long: Large ribosomal subunit protein bL25 (207 aa).

A disordered region spans residues 171 to 207; it reads ESVVTVEVPEDATESTTAPEAAAAPADAAAAPAADAK. Residues 184–207 are compositionally biased toward low complexity; it reads ESTTAPEAAAAPADAAAAPAADAK.

The protein belongs to the bacterial ribosomal protein bL25 family. CTC subfamily. As to quaternary structure, part of the 50S ribosomal subunit; part of the 5S rRNA/L5/L18/L25 subcomplex. Contacts the 5S rRNA. Binds to the 5S rRNA independently of L5 and L18.

Functionally, this is one of the proteins that binds to the 5S RNA in the ribosome where it forms part of the central protuberance. This Bifidobacterium longum subsp. infantis (strain ATCC 15697 / DSM 20088 / JCM 1222 / NCTC 11817 / S12) protein is Large ribosomal subunit protein bL25.